Reading from the N-terminus, the 248-residue chain is tRNA1(Val) (adenine(37)-N6)-methyltransferase (248 aa).

It belongs to the methyltransferase superfamily. tRNA (adenine-N(6)-)-methyltransferase family.

The protein resides in the cytoplasm. It catalyses the reaction adenosine(37) in tRNA1(Val) + S-adenosyl-L-methionine = N(6)-methyladenosine(37) in tRNA1(Val) + S-adenosyl-L-homocysteine + H(+). Its function is as follows. Specifically methylates the adenine in position 37 of tRNA(1)(Val) (anticodon cmo5UAC). This is tRNA1(Val) (adenine(37)-N6)-methyltransferase from Musicola paradisiaca (strain Ech703) (Dickeya paradisiaca).